The chain runs to 418 residues: UDP-N-acetylglucosamine 1-carboxyvinyltransferase (418 aa).

23-24 (KN) is a phosphoenolpyruvate binding site. Arginine 92 contacts UDP-N-acetyl-alpha-D-glucosamine. Catalysis depends on cysteine 116, which acts as the Proton donor. Residue cysteine 116 is modified to 2-(S-cysteinyl)pyruvic acid O-phosphothioketal. UDP-N-acetyl-alpha-D-glucosamine is bound by residues 121–125 (RPVDL), 161–164 (KVSV), aspartate 306, and isoleucine 328.

It belongs to the EPSP synthase family. MurA subfamily.

Its subcellular location is the cytoplasm. It carries out the reaction phosphoenolpyruvate + UDP-N-acetyl-alpha-D-glucosamine = UDP-N-acetyl-3-O-(1-carboxyvinyl)-alpha-D-glucosamine + phosphate. It participates in cell wall biogenesis; peptidoglycan biosynthesis. Cell wall formation. Adds enolpyruvyl to UDP-N-acetylglucosamine. The chain is UDP-N-acetylglucosamine 1-carboxyvinyltransferase from Vibrio parahaemolyticus serotype O3:K6 (strain RIMD 2210633).